A 174-amino-acid chain; its full sequence is MKYRLGDARVETHPDSWIAPSAAVIGKVRLDAGASVWFGAVLRGDNELIHIGEHSNVQDGSVMHTDMGYPLTLGKGVTVGHNAMLHGCSVGDYSLVGINAVILNGAKIGKYCIIGANALIPEGKEIPDGSLVMGSPGKVVRELSEPQKKMLEASAAHYVHNARRYARDLVEDPA.

Belongs to the gamma-class carbonic anhydrase family.

This is an uncharacterized protein from Pseudomonas aeruginosa (strain ATCC 15692 / DSM 22644 / CIP 104116 / JCM 14847 / LMG 12228 / 1C / PRS 101 / PAO1).